A 1062-amino-acid chain; its full sequence is Carbamoyl phosphate synthase pyrimidine-specific large chain (1062 aa).

Residues 1 to 401 (MGKREDIKKI…SLLKAVRSLE (401 aa)) form a carboxyphosphate synthetic domain region. Residues arginine 129, arginine 169, glycine 175, glycine 176, lysine 208, isoleucine 210, glutamate 215, glycine 241, valine 242, histidine 243, glutamine 284, and glutamate 298 each coordinate ATP. Residues 133-327 (RALMKELNEP…IAKIAAKIAV (195 aa)) form the ATP-grasp 1 domain. Glutamine 284, glutamate 298, and asparagine 300 together coordinate Mg(2+). Mn(2+)-binding residues include glutamine 284, glutamate 298, and asparagine 300. An oligomerization domain region spans residues 402 to 546 (AGVYHLDQPD…YGTYEEENES (145 aa)). Positions 547–929 (ERTDKKSILV…ALYKGLIASG (383 aa)) are carbamoyl phosphate synthetic domain. The region spanning 671 to 861 (EQTLVELNIP…MANVATKVML (191 aa)) is the ATP-grasp 2 domain. Positions 707, 746, 748, 752, 777, 778, 779, 780, 820, and 832 each coordinate ATP. Mg(2+) is bound by residues glutamine 820, glutamate 832, and asparagine 834. Mn(2+)-binding residues include glutamine 820, glutamate 832, and asparagine 834. In terms of domain architecture, MGS-like spans 930 to 1062 (MSIPTHGSVL…FSAESMPVMQ (133 aa)). The allosteric domain stretch occupies residues 930 to 1062 (MSIPTHGSVL…FSAESMPVMQ (133 aa)).

This sequence belongs to the CarB family. In terms of assembly, composed of two chains; the small (or glutamine) chain promotes the hydrolysis of glutamine to ammonia, which is used by the large (or ammonia) chain to synthesize carbamoyl phosphate. Tetramer of heterodimers (alpha,beta)4. Mg(2+) is required as a cofactor. Mn(2+) serves as cofactor.

It carries out the reaction hydrogencarbonate + L-glutamine + 2 ATP + H2O = carbamoyl phosphate + L-glutamate + 2 ADP + phosphate + 2 H(+). It catalyses the reaction hydrogencarbonate + NH4(+) + 2 ATP = carbamoyl phosphate + 2 ADP + phosphate + 2 H(+). It participates in amino-acid biosynthesis; L-arginine biosynthesis; carbamoyl phosphate from bicarbonate: step 1/1. Its pathway is pyrimidine metabolism; UMP biosynthesis via de novo pathway; (S)-dihydroorotate from bicarbonate: step 1/3. Small subunit of the glutamine-dependent carbamoyl phosphate synthetase (CPSase). CPSase catalyzes the formation of carbamoyl phosphate from the ammonia moiety of glutamine, carbonate, and phosphate donated by ATP, constituting the first step of the biosynthetic pathway leading to pyrimidine nucleotides. The large subunit (synthetase) binds the substrates ammonia (free or transferred from glutamine from the small subunit), hydrogencarbonate and ATP and carries out an ATP-coupled ligase reaction, activating hydrogencarbonate by forming carboxy phosphate which reacts with ammonia to form carbamoyl phosphate. In Halalkalibacterium halodurans (strain ATCC BAA-125 / DSM 18197 / FERM 7344 / JCM 9153 / C-125) (Bacillus halodurans), this protein is Carbamoyl phosphate synthase pyrimidine-specific large chain (pyrAB).